A 207-amino-acid chain; its full sequence is Thiamine-phosphate synthase (207 aa).

Residues 38 to 42 and N70 each bind 4-amino-2-methyl-5-(diphosphooxymethyl)pyrimidine; that span reads QYRAK. Mg(2+)-binding residues include D71 and D90. T109 contributes to the 4-amino-2-methyl-5-(diphosphooxymethyl)pyrimidine binding site. Residue 135–137 coordinates 2-[(2R,5Z)-2-carboxy-4-methylthiazol-5(2H)-ylidene]ethyl phosphate; sequence TNS. K138 provides a ligand contact to 4-amino-2-methyl-5-(diphosphooxymethyl)pyrimidine. 2-[(2R,5Z)-2-carboxy-4-methylthiazol-5(2H)-ylidene]ethyl phosphate is bound by residues G165 and 185–186; that span reads IS.

Belongs to the thiamine-phosphate synthase family. Mg(2+) serves as cofactor.

The catalysed reaction is 2-[(2R,5Z)-2-carboxy-4-methylthiazol-5(2H)-ylidene]ethyl phosphate + 4-amino-2-methyl-5-(diphosphooxymethyl)pyrimidine + 2 H(+) = thiamine phosphate + CO2 + diphosphate. It carries out the reaction 2-(2-carboxy-4-methylthiazol-5-yl)ethyl phosphate + 4-amino-2-methyl-5-(diphosphooxymethyl)pyrimidine + 2 H(+) = thiamine phosphate + CO2 + diphosphate. It catalyses the reaction 4-methyl-5-(2-phosphooxyethyl)-thiazole + 4-amino-2-methyl-5-(diphosphooxymethyl)pyrimidine + H(+) = thiamine phosphate + diphosphate. The protein operates within cofactor biosynthesis; thiamine diphosphate biosynthesis; thiamine phosphate from 4-amino-2-methyl-5-diphosphomethylpyrimidine and 4-methyl-5-(2-phosphoethyl)-thiazole: step 1/1. Condenses 4-methyl-5-(beta-hydroxyethyl)thiazole monophosphate (THZ-P) and 2-methyl-4-amino-5-hydroxymethyl pyrimidine pyrophosphate (HMP-PP) to form thiamine monophosphate (TMP). This is Thiamine-phosphate synthase from Clostridium perfringens (strain SM101 / Type A).